Reading from the N-terminus, the 232-residue chain is Large ribosomal subunit protein uL1 (232 aa).

This sequence belongs to the universal ribosomal protein uL1 family. As to quaternary structure, part of the 50S ribosomal subunit.

Functionally, binds directly to 23S rRNA. The L1 stalk is quite mobile in the ribosome, and is involved in E site tRNA release. Its function is as follows. Protein L1 is also a translational repressor protein, it controls the translation of the L11 operon by binding to its mRNA. The sequence is that of Large ribosomal subunit protein uL1 from Chlamydia caviae (strain ATCC VR-813 / DSM 19441 / 03DC25 / GPIC) (Chlamydophila caviae).